Here is a 361-residue protein sequence, read N- to C-terminus: PTI1-like tyrosine-protein kinase At3g15890 (361 aa).

In terms of domain architecture, Protein kinase spans 39 to 328 (FNYDNKLGEG…ISELEANPLF (290 aa)). Residues 45–53 (LGEGRFGSV) and K67 contribute to the ATP site. The Proton acceptor role is filled by D165. Disordered stretches follow at residues 195–219 (TGDGATKAKSNNGYISPECDASGKE) and 323–361 (EANPLFKNPYSSNENNREHVAEESSDVILEDKDHQQQQE). Positions 351–361 (LEDKDHQQQQE) are enriched in basic and acidic residues.

The protein belongs to the protein kinase superfamily. Tyr protein kinase family.

It catalyses the reaction L-tyrosyl-[protein] + ATP = O-phospho-L-tyrosyl-[protein] + ADP + H(+). The polypeptide is PTI1-like tyrosine-protein kinase At3g15890 (Arabidopsis thaliana (Mouse-ear cress)).